The chain runs to 564 residues: Carbamoyl phosphate synthase large chain, N-terminal section (564 aa).

The carboxyphosphate synthetic domain stretch occupies residues 1–399 (MPETPNKVLI…ALQKAIRSLE (399 aa)). Positions 127, 167, 173, 174, 206, 208, 213, 239, 240, 241, 282, and 296 each coordinate ATP. Positions 131-325 (RAFMKKIGEP…IARIAAKIAI (195 aa)) constitute an ATP-grasp domain. The Mg(2+) site is built by Gln-282, Glu-296, and Asn-298. Mn(2+)-binding residues include Gln-282, Glu-296, and Asn-298. Residues 400-560 (IGEPGLGPSP…YSTYEEECEA (161 aa)) are oligomerization domain.

Belongs to the CarB family. In terms of assembly, composed of two chains; the small (or glutamine) chain promotes the hydrolysis of glutamine to ammonia, which is used by the large (or ammonia) chain to synthesize carbamoyl phosphate. Tetramer of heterodimers (alpha,beta)4. It depends on Mg(2+) as a cofactor. Mn(2+) serves as cofactor.

It carries out the reaction hydrogencarbonate + L-glutamine + 2 ATP + H2O = carbamoyl phosphate + L-glutamate + 2 ADP + phosphate + 2 H(+). The enzyme catalyses hydrogencarbonate + NH4(+) + 2 ATP = carbamoyl phosphate + 2 ADP + phosphate + 2 H(+). It participates in amino-acid biosynthesis; L-arginine biosynthesis; carbamoyl phosphate from bicarbonate: step 1/1. The protein operates within pyrimidine metabolism; UMP biosynthesis via de novo pathway; (S)-dihydroorotate from bicarbonate: step 1/3. Its function is as follows. Large subunit of the glutamine-dependent carbamoyl phosphate synthetase (CPSase). CPSase catalyzes the formation of carbamoyl phosphate from the ammonia moiety of glutamine, carbonate, and phosphate donated by ATP, constituting the first step of 2 biosynthetic pathways, one leading to arginine and/or urea and the other to pyrimidine nucleotides. The large subunit (synthetase) binds the substrates ammonia (free or transferred from glutamine from the small subunit), hydrogencarbonate and ATP and carries out an ATP-coupled ligase reaction, activating hydrogencarbonate by forming carboxy phosphate which reacts with ammonia to form carbamoyl phosphate. The chain is Carbamoyl phosphate synthase large chain, N-terminal section (carB1) from Methanopyrus kandleri (strain AV19 / DSM 6324 / JCM 9639 / NBRC 100938).